The following is a 637-amino-acid chain: tRNA uridine 5-carboxymethylaminomethyl modification enzyme MnmG (637 aa).

FAD contacts are provided by residues 15 to 20, isoleucine 127, and serine 182; that span reads GAGHAG. 276 to 290 is an NAD(+) binding site; the sequence is GPRYCPSIEDKIVRF. Position 373 (glutamine 373) interacts with FAD.

This sequence belongs to the MnmG family. In terms of assembly, homodimer. Heterotetramer of two MnmE and two MnmG subunits. The cofactor is FAD.

Its subcellular location is the cytoplasm. In terms of biological role, NAD-binding protein involved in the addition of a carboxymethylaminomethyl (cmnm) group at the wobble position (U34) of certain tRNAs, forming tRNA-cmnm(5)s(2)U34. This chain is tRNA uridine 5-carboxymethylaminomethyl modification enzyme MnmG, found in Streptococcus pneumoniae serotype 4 (strain ATCC BAA-334 / TIGR4).